Reading from the N-terminus, the 259-residue chain is uncharacterized protein (259 aa).

Positions 1–28 (MNIKRRLKYLTSCLLVSAFFWINSSAWA) are cleaved as a signal peptide. 2 helical membrane-spanning segments follow: residues 32-52 (EIPP…IYVA) and 191-211 (WGFL…GIFT).

The protein resides in the cell membrane. This is an uncharacterized protein from Coxiella burnetii (strain RSA 493 / Nine Mile phase I).